The chain runs to 714 residues: Structure-specific endonuclease subunit SLX4 2 (714 aa).

2 stretches are compositionally biased toward basic and acidic residues: residues 1 to 14 (MSPEGEESHAEDNL) and 24 to 34 (IHEETLAEESH). Disordered stretches follow at residues 1-114 (MSPE…EQQG) and 338-369 (SSGPVNDKQPSVASETVESDSTPIVSPVKTPQ). Over residues 36-46 (QAIQRSISRLS) the composition is skewed to polar residues. Over residues 79–92 (KTKKRKLKVSKPRK) the composition is skewed to basic residues.

This sequence belongs to the SLX4 family. As to quaternary structure, forms a heterodimer with SLX1. Phosphorylated in response to DNA damage.

It is found in the nucleus. Its function is as follows. Regulatory subunit of the SLX1-SLX4 structure-specific endonuclease that resolves DNA secondary structures generated during DNA repair and recombination. Has endonuclease activity towards branched DNA substrates, introducing single-strand cuts in duplex DNA close to junctions with ss-DNA. This Candida tropicalis (strain ATCC MYA-3404 / T1) (Yeast) protein is Structure-specific endonuclease subunit SLX4 2.